A 247-amino-acid polypeptide reads, in one-letter code: Geranylgeranylglyceryl phosphate synthase (247 aa).

Residues aspartate 24 and serine 53 each coordinate Mg(2+). Sn-glycerol 1-phosphate-binding positions include 172 to 178 (YLEAGSG), 203 to 204 (GG), and 225 to 226 (GT).

Belongs to the GGGP/HepGP synthase family. Group II subfamily. Mg(2+) serves as cofactor.

It is found in the cytoplasm. It catalyses the reaction sn-glycerol 1-phosphate + (2E,6E,10E)-geranylgeranyl diphosphate = sn-3-O-(geranylgeranyl)glycerol 1-phosphate + diphosphate. The protein operates within membrane lipid metabolism; glycerophospholipid metabolism. In terms of biological role, prenyltransferase that catalyzes the transfer of the geranylgeranyl moiety of geranylgeranyl diphosphate (GGPP) to the C3 hydroxyl of sn-glycerol-1-phosphate (G1P). This reaction is the first ether-bond-formation step in the biosynthesis of archaeal membrane lipids. This is Geranylgeranylglyceryl phosphate synthase from Cenarchaeum symbiosum (strain A).